The following is a 195-amino-acid chain: NADH dehydrogenase [ubiquinone] iron-sulfur protein 3 (195 aa).

Belongs to the complex I 30 kDa subunit family. Complex I is composed of about 45 different subunits. This is a component of the iron-sulfur (IP) fragment of the enzyme.

The protein resides in the mitochondrion inner membrane. It catalyses the reaction a ubiquinone + NADH + 5 H(+)(in) = a ubiquinol + NAD(+) + 4 H(+)(out). Core subunit of the mitochondrial membrane respiratory chain NADH dehydrogenase (Complex I) that is believed to belong to the minimal assembly required for catalysis. Complex I functions in the transfer of electrons from NADH to the respiratory chain. The immediate electron acceptor for the enzyme is believed to be ubiquinone. The polypeptide is NADH dehydrogenase [ubiquinone] iron-sulfur protein 3 (NAD9) (Marchantia polymorpha (Common liverwort)).